Reading from the N-terminus, the 295-residue chain is Protease HtpX (295 aa).

The next 2 membrane-spanning stretches (helical) occupy residues 4–24 (IFLF…VLRL) and 42–62 (ALLI…LAIS). His147 contacts Zn(2+). The active site involves Glu148. His151 lines the Zn(2+) pocket. The next 2 helical transmembrane spans lie at 155–175 (GDMV…IFLA) and 197–217 (FWIT…IIVM). Residue Glu224 participates in Zn(2+) binding.

This sequence belongs to the peptidase M48B family. It depends on Zn(2+) as a cofactor.

The protein localises to the cell inner membrane. The chain is Protease HtpX from Thioalkalivibrio sulfidiphilus (strain HL-EbGR7).